A 479-amino-acid chain; its full sequence is Xylose isomerase (479 aa).

His-144 is an active-site residue. Residues Glu-275, Glu-311, His-314, Asp-339, Asp-350, Asp-352, and Tyr-382 each coordinate Mn(2+).

The protein belongs to the xylose isomerase family. Homodimer. Requires Mn(2+) as cofactor.

It catalyses the reaction alpha-D-xylose = alpha-D-xylulofuranose. This Hordeum vulgare (Barley) protein is Xylose isomerase (XYLA).